Here is a 578-residue protein sequence, read N- to C-terminus: Triokinase/FMN cyclase (578 aa).

The 328-residue stretch at Ser-9–Trp-336 folds into the DhaK domain. Residues Gly-56–His-59, Lys-109, and Asp-114 each bind dihydroxyacetone. His-221 (tele-hemiaminal-histidine intermediate) is an active-site residue. Residues Lys-372–Glu-571 enclose the DhaL domain. Residues Asp-401–Cys-404, Ser-446–Ser-447, Gly-486, and Thr-494–Met-495 contribute to the ATP site. Residues Ser-511 and Ser-545 each carry the phosphoserine modification. An ATP-binding site is contributed by Asp-556–Gly-558.

The protein belongs to the dihydroxyacetone kinase (DAK) family. Homodimer. Interacts with IFIH1 (via the CARD domains), the interaction is inhibited by viral infection. The cofactor is Mg(2+). Mn(2+) serves as cofactor. Co(2+) is required as a cofactor.

It carries out the reaction dihydroxyacetone + ATP = dihydroxyacetone phosphate + ADP + H(+). It catalyses the reaction D-glyceraldehyde + ATP = D-glyceraldehyde 3-phosphate + ADP + H(+). The enzyme catalyses FAD = riboflavin cyclic-4',5'-phosphate + AMP + H(+). With respect to regulation, each activity is inhibited by the substrate(s) of the other. Catalyzes both the phosphorylation of dihydroxyacetone and of glyceraldehyde, and the splitting of ribonucleoside diphosphate-X compounds among which FAD is the best substrate. Represses IFIH1-mediated cellular antiviral response. The chain is Triokinase/FMN cyclase from Mus musculus (Mouse).